Here is a 518-residue protein sequence, read N- to C-terminus: Putative N-acetylmuramoyl-L-alanine amidase YrvJ (518 aa).

A signal peptide spans 1–27 (MNKKYFVLIVCIIFTSALFPTFSSVTA). SH3b domains lie at 29 to 91 (QGEA…ITKE), 102 to 164 (SDTV…TSGG), 181 to 243 (STTG…LTSS), and 258 to 320 (AKKA…VQTS). Disordered regions lie at residues 94–121 (ASTS…PGTS) and 160–186 (VTSG…TGTV). 2 stretches are compositionally biased toward low complexity: residues 95 to 108 (STSS…VTST) and 160 to 169 (VTSGGSSSAS). Residues 322–352 (SAEEAGEPPVSDSPSGNGSLNNKTIIVDPGH) form a disordered region. Residues 333–345 (DSPSGNGSLNNKT) show a composition bias toward polar residues. One can recognise a MurNAc-LAA domain in the interval 346–514 (IIVDPGHGGK…VTDGIESGLE (169 aa)).

It belongs to the N-acetylmuramoyl-L-alanine amidase 3 family.

The protein localises to the secreted. It localises to the cell wall. The catalysed reaction is Hydrolyzes the link between N-acetylmuramoyl residues and L-amino acid residues in certain cell-wall glycopeptides.. Its function is as follows. Probably involved in cell-wall metabolism. This chain is Putative N-acetylmuramoyl-L-alanine amidase YrvJ (yrvJ), found in Bacillus subtilis (strain 168).